Here is a 447-residue protein sequence, read N- to C-terminus: Phosphoglucosamine mutase (447 aa).

Ser105 acts as the Phosphoserine intermediate in catalysis. Residues Ser105, Asp244, Asp246, and Asp248 each contribute to the Mg(2+) site. Ser105 is subject to Phosphoserine.

Belongs to the phosphohexose mutase family. It depends on Mg(2+) as a cofactor. In terms of processing, activated by phosphorylation.

The catalysed reaction is alpha-D-glucosamine 1-phosphate = D-glucosamine 6-phosphate. Its function is as follows. Catalyzes the conversion of glucosamine-6-phosphate to glucosamine-1-phosphate. The chain is Phosphoglucosamine mutase from Polynucleobacter asymbioticus (strain DSM 18221 / CIP 109841 / QLW-P1DMWA-1) (Polynucleobacter necessarius subsp. asymbioticus).